Consider the following 790-residue polypeptide: LPS-assembly protein LptD (790 aa).

An N-terminal signal peptide occupies residues 1–20 (MRMLRWLILSAFSVAGAVQA).

The protein belongs to the LptD family. As to quaternary structure, component of the lipopolysaccharide transport and assembly complex. Interacts with LptE and LptA.

Its subcellular location is the cell outer membrane. Functionally, together with LptE, is involved in the assembly of lipopolysaccharide (LPS) at the surface of the outer membrane. The chain is LPS-assembly protein LptD from Bordetella pertussis (strain Tohama I / ATCC BAA-589 / NCTC 13251).